Consider the following 397-residue polypeptide: Phosphoglycerate kinase (397 aa).

Substrate-binding positions include 23-25 (DFN), R38, 61-64 (HMGK), R122, and R155. ATP contacts are provided by residues K206, G296, E327, and 353–356 (GGDS).

Belongs to the phosphoglycerate kinase family. As to quaternary structure, monomer.

Its subcellular location is the cytoplasm. The enzyme catalyses (2R)-3-phosphoglycerate + ATP = (2R)-3-phospho-glyceroyl phosphate + ADP. The protein operates within carbohydrate degradation; glycolysis; pyruvate from D-glyceraldehyde 3-phosphate: step 2/5. This chain is Phosphoglycerate kinase, found in Clostridium perfringens (strain SM101 / Type A).